Reading from the N-terminus, the 87-residue chain is Small ribosomal subunit protein bS20 (87 aa).

The protein belongs to the bacterial ribosomal protein bS20 family.

Binds directly to 16S ribosomal RNA. This chain is Small ribosomal subunit protein bS20, found in Clostridium botulinum (strain Alaska E43 / Type E3).